We begin with the raw amino-acid sequence, 218 residues long: Adenylate kinase (218 aa).

10–15 serves as a coordination point for ATP; the sequence is GAGKGT. Residues 30-59 are NMP; sequence STGDMLRAAVKAGTPLGLEAKKVMDAGGLV. AMP-binding positions include Thr31, Arg36, 57–59, 85–88, and Gln92; these read GLV and GFPR. The segment at 122 to 159 is LID; the sequence is ERRVHPASGRSYHVRFNPPKAEGVDDVTGEPLVQRDDD. ATP-binding positions include Arg123 and 132-133; that span reads SY. AMP contacts are provided by Arg156 and Arg167. Position 203 (Gly203) interacts with ATP.

This sequence belongs to the adenylate kinase family. In terms of assembly, monomer.

It localises to the cytoplasm. The catalysed reaction is AMP + ATP = 2 ADP. Its pathway is purine metabolism; AMP biosynthesis via salvage pathway; AMP from ADP: step 1/1. In terms of biological role, catalyzes the reversible transfer of the terminal phosphate group between ATP and AMP. Plays an important role in cellular energy homeostasis and in adenine nucleotide metabolism. This is Adenylate kinase from Bordetella pertussis (strain Tohama I / ATCC BAA-589 / NCTC 13251).